The sequence spans 220 residues: Putative 3-methyladenine DNA glycosylase (220 aa).

The protein belongs to the DNA glycosylase MPG family.

The sequence is that of Putative 3-methyladenine DNA glycosylase from Rickettsia bellii (strain RML369-C).